The following is a 296-amino-acid chain: Formylmethanofuran--tetrahydromethanopterin formyltransferase (296 aa).

This sequence belongs to the FTR family. Homotetramer composed of two dimers. Dimerization is sufficient for enzyme activity, but tetramerization is required for high thermostability.

The protein resides in the cytoplasm. It catalyses the reaction N-formylmethanofuran + 5,6,7,8-tetrahydromethanopterin + H(+) = N(5)-formyl-5,6,7,8-tetrahydromethanopterin + methanofuran. Its pathway is one-carbon metabolism; methanogenesis from CO(2); 5,10-methenyl-5,6,7,8-tetrahydromethanopterin from CO(2): step 2/3. Its activity is regulated as follows. Requires high salt concentrations for activity and thermostability; 1.5-1.8 M KH(2)PO(4) stimulates activity while stabilizing the enzyme. Functionally, catalyzes the reversible transfer of a formyl group from formylmethanofuran (formyl-MFR) to tetrahydromethanopterin (H(4)MPT) to produce 5-formyl tetrahydromethanopterin (5-formyl-H(4)MPT) and methanofuran (MFR). Acts via a ternary-complex mechanism. Uses N-furfurylformamide much less efficiently, does not use N-methylformamide or formamide. Protein overexpressed in E.coli has very similar properties to enzyme purified from M.kandleri. This Methanopyrus kandleri (strain AV19 / DSM 6324 / JCM 9639 / NBRC 100938) protein is Formylmethanofuran--tetrahydromethanopterin formyltransferase.